The sequence spans 341 residues: NADH-ubiquinone oxidoreductase chain 2 (341 aa).

9 helical membrane passes run 8–28, 61–81, 95–115, 145–165, 174–191, 195–215, 238–258, 272–292, and 321–341; these read IFLI…SWLG, FLTQ…LMFL, ILIL…FWFP, FIYN…SLGG, LMAF…LAMM, MLWM…VLMF, LLIF…GFLP, LFIL…YLRL, and LIFN…YIIM.

It belongs to the complex I subunit 2 family.

Its subcellular location is the mitochondrion inner membrane. The enzyme catalyses a ubiquinone + NADH + 5 H(+)(in) = a ubiquinol + NAD(+) + 4 H(+)(out). Core subunit of the mitochondrial membrane respiratory chain NADH dehydrogenase (Complex I) that is believed to belong to the minimal assembly required for catalysis. Complex I functions in the transfer of electrons from NADH to the respiratory chain. The immediate electron acceptor for the enzyme is believed to be ubiquinone. The polypeptide is NADH-ubiquinone oxidoreductase chain 2 (mt:ND2) (Anopheles gambiae (African malaria mosquito)).